A 115-amino-acid chain; its full sequence is Nucleoid-associated protein P9211_00201 (115 aa).

It belongs to the YbaB/EbfC family. As to quaternary structure, homodimer.

The protein localises to the cytoplasm. It localises to the nucleoid. Its function is as follows. Binds to DNA and alters its conformation. May be involved in regulation of gene expression, nucleoid organization and DNA protection. This is Nucleoid-associated protein P9211_00201 from Prochlorococcus marinus (strain MIT 9211).